The chain runs to 259 residues: Diphthine synthase (259 aa).

Residues L9, D85, V88, 113–114, L168, A209, and H234 contribute to the S-adenosyl-L-methionine site; that span reads TA.

Belongs to the diphthine synthase family. As to quaternary structure, homodimer.

It catalyses the reaction 2-[(3S)-amino-3-carboxypropyl]-L-histidyl-[translation elongation factor 2] + 3 S-adenosyl-L-methionine = diphthine-[translation elongation factor 2] + 3 S-adenosyl-L-homocysteine + 3 H(+). It participates in protein modification; peptidyl-diphthamide biosynthesis. Its function is as follows. S-adenosyl-L-methionine-dependent methyltransferase that catalyzes the trimethylation of the amino group of the modified target histidine residue in translation elongation factor 2 (EF-2), to form an intermediate called diphthine. The three successive methylation reactions represent the second step of diphthamide biosynthesis. This is Diphthine synthase from Haloarcula marismortui (strain ATCC 43049 / DSM 3752 / JCM 8966 / VKM B-1809) (Halobacterium marismortui).